The chain runs to 392 residues: BURP domain protein RD22 (392 aa).

Residues 1–22 (MAIRLPLICLLGSFMVVAIAAD) form the signal peptide. TXV repeat units lie at residues 56 to 58 (TNV), 78 to 80 (TAV), 100 to 102 (THV), and 125 to 127 (TDV). Residues 57–164 (NVQVGKGGVN…PFVYNYAAKE (108 aa)) form a 5 X approximate repeats region. Residues 61–136 (GKGGVNVNTH…VGVGKGGVTV (76 aa)) form a disordered region. The span at 94 to 114 (GKPGGGTHVSVGSGKGHGGGV) shows a compositional bias: gly residues. The BURP domain maps to 176–392 (FFLEKDLVRG…PETHVVWFSY (217 aa)).

In terms of tissue distribution, expressed in seed. Highest expression in leaves and guard cells.

Functionally, acts to suppress chlorophyll degradation under moisture stress. The polypeptide is BURP domain protein RD22 (Arabidopsis thaliana (Mouse-ear cress)).